Reading from the N-terminus, the 833-residue chain is DNA ligase (833 aa).

NAD(+)-binding positions include 35–39, 84–85, and glutamate 115; these read DADYD and SL. The N6-AMP-lysine intermediate role is filled by lysine 117. NAD(+) is bound by residues arginine 138, glutamate 175, lysine 292, and lysine 316. Zn(2+)-binding residues include cysteine 410, cysteine 413, cysteine 428, and cysteine 434. Residues 750-833 enclose the BRCT domain; that stretch reads LQTGPLDGQT…AFLGDHGQQP (84 aa).

Belongs to the NAD-dependent DNA ligase family. LigA subfamily. It depends on Mg(2+) as a cofactor. Requires Mn(2+) as cofactor.

The catalysed reaction is NAD(+) + (deoxyribonucleotide)n-3'-hydroxyl + 5'-phospho-(deoxyribonucleotide)m = (deoxyribonucleotide)n+m + AMP + beta-nicotinamide D-nucleotide.. Functionally, DNA ligase that catalyzes the formation of phosphodiester linkages between 5'-phosphoryl and 3'-hydroxyl groups in double-stranded DNA using NAD as a coenzyme and as the energy source for the reaction. It is essential for DNA replication and repair of damaged DNA. The protein is DNA ligase of Xanthomonas euvesicatoria pv. vesicatoria (strain 85-10) (Xanthomonas campestris pv. vesicatoria).